The chain runs to 40 residues: Mastoparan-like peptide 12c (40 aa).

An N-terminal signal peptide occupies residues Met-1–Ala-7. Positions Met-1–Asp-22 are disordered. 4 AXPX repeats span residues Ala-7 to Lys-10, Ala-11 to Leu-14, Ala-15 to Asn-18, and Pro-19 to Asp-22. Residues Asp-8 to Ala-25 constitute a propeptide that is removed on maturation. At Leu-39 the chain carries Leucine amide.

It belongs to the MCD family. Mastoparan subfamily. In terms of tissue distribution, expressed by the venom gland.

The protein localises to the secreted. Functionally, shows mast cell degranulation and antimicrobial activities against the Gram-negative bacteria E.coli ATCC 25922 (MIC=6.0 ug/ml), the Gram-positive bacteria S.aureus ATCC 2592 (MIC=3.0 ug/ml) and the fungus C.albicans ATCC 2002 (MIC=12 ug/ml). Exhibits little hemolytic activity against washed human erythrocytes. Its mast cell degranulation activity may be related to the activation of G-protein coupled receptors in mast cells as well as interaction with other proteins located in cell endosomal membranes in the mast cells. The protein is Mastoparan-like peptide 12c of Vespa magnifica (Hornet).